The sequence spans 762 residues: Homeobox-leucine zipper protein MERISTEM L1 (762 aa).

The disordered stretch occupies residues 13–72; the sequence is MFDMTPKNSENDLGITGSHEEDFETKSGAEVTMENPLEEELQDPNQRPNKKKRYHRHTQR. Over residues 30 to 39 the composition is skewed to basic and acidic residues; it reads SHEEDFETKS. The segment covering 60-71 has biased composition (basic residues); the sequence is PNKKKRYHRHTQ. The homeobox DNA-binding region spans 62–121; it reads KKKRYHRHTQRQIQELESFFKECPHPDDKQRKELSRELSLEPLQVKFWFQNKRTQMKAQH. Residues 110-192 are a coiled coil; the sequence is FQNKRTQMKA…DRISAIAAKY (83 aa). The region spanning 253–484 is the START domain; it reads SEADKPMIVE…LDRQCERLAS (232 aa).

The protein belongs to the HD-ZIP homeobox family. Class IV subfamily. Interacts with GAI/RGA2, RGA/RGA1/GRS, RGL2/SCL19 and PDF2. Interacts with AIL7/PLT7, ANT, BBM and AIL1.

The protein resides in the nucleus. In terms of biological role, probable transcription factor involved in cell specification and pattern formation during embryogenesis. Binds to the L1 box DNA sequence 5'-TAAATG[CT]A-3'. Plays a role in maintaining the identity of L1 cells, possibly by interacting with their L1 box or other target-gene promoters; binds to the LIP1 gene promoter and stimulates its expression upon imbibition. Acts as a positive regulator of gibberellins (GAs)-regulated epidermal gene expression (e.g. LIP1, LIP2, LTP1, FDH and PDF1). Functionally redundant to PDF2. Seems to promote cell differentiation. This chain is Homeobox-leucine zipper protein MERISTEM L1, found in Arabidopsis thaliana (Mouse-ear cress).